Consider the following 360-residue polypeptide: Protein Wnt-2 (360 aa).

A signal peptide spans M1–S26. 11 cysteine pairs are disulfide-bonded: C76/C87, C127/C135, C137/C157, C206/C220, C208/C215, C278/C309, C294/C304, C308/C348, C324/C339, C326/C336, and C331/C332. Residue S212 is the site of O-palmitoleoyl serine; by PORCN attachment. N-linked (GlcNAc...) asparagine glycosylation is present at N295.

Belongs to the Wnt family. In terms of processing, palmitoleoylation is required for efficient binding to frizzled receptors. Depalmitoleoylation leads to Wnt signaling pathway inhibition.

The protein localises to the secreted. The protein resides in the extracellular space. It localises to the extracellular matrix. In terms of biological role, ligand for members of the frizzled family of seven transmembrane receptors. Probable developmental protein. May be a signaling molecule which affects the development of discrete regions of tissues. Is likely to signal over only few cell diameters. This Eulemur macaco macaco (Black lemur) protein is Protein Wnt-2 (WNT2).